The chain runs to 445 residues: C4-dicarboxylate transport protein (445 aa).

The next 8 membrane-spanning stretches (helical) occupy residues 17 to 37 (FYQI…LLGY), 56 to 76 (LVKM…IAAM), 91 to 111 (VYFL…SHIV), 157 to 177 (FVGG…LSLA), 200 to 220 (LVAI…AFTI), 233 to 253 (MLVG…LGMV), 319 to 339 (IYMT…LSLG), and 367 to 387 (AATL…ILGV).

Belongs to the dicarboxylate/amino acid:cation symporter (DAACS) (TC 2.A.23) family.

The protein resides in the cell inner membrane. In terms of biological role, responsible for the transport of dicarboxylates such as succinate, fumarate, and malate from the periplasm across the membrane. The chain is C4-dicarboxylate transport protein from Bordetella avium (strain 197N).